A 410-amino-acid polypeptide reads, in one-letter code: Peptidase T (410 aa).

Histidine 79 is a binding site for Zn(2+). Aspartate 81 is a catalytic residue. Residue aspartate 142 coordinates Zn(2+). The active-site Proton acceptor is the glutamate 176. Zn(2+)-binding residues include glutamate 177, aspartate 199, and histidine 381.

It belongs to the peptidase M20B family. The cofactor is Zn(2+).

It is found in the cytoplasm. The enzyme catalyses Release of the N-terminal residue from a tripeptide.. Cleaves the N-terminal amino acid of tripeptides. The polypeptide is Peptidase T (pepT) (Bacillus subtilis (strain 168)).